Reading from the N-terminus, the 313-residue chain is Solute carrier family 35 member E3 (313 aa).

9 helical membrane-spanning segments follow: residues 17 to 37 (GLLF…WIYV), 40 to 60 (GFPN…GLYI), 71 to 91 (SLPL…VVFT), 126 to 146 (FSVR…LNSY), 154 to 174 (LGMV…VWVG), 187 to 206 (LLYY…VPFF), 225 to 245 (LMVL…YWII), 252 to 272 (TYNM…YILF), and 275 to 295 (PLSV…LTYT).

This sequence belongs to the TPT transporter family. SLC35E subfamily.

The protein resides in the membrane. In terms of biological role, putative transporter. This chain is Solute carrier family 35 member E3 (Slc35e3), found in Mus musculus (Mouse).